The sequence spans 282 residues: Elongation factor Ts (282 aa).

The involved in Mg(2+) ion dislocation from EF-Tu stretch occupies residues 80-83 (TDFV).

Belongs to the EF-Ts family.

Its subcellular location is the cytoplasm. Functionally, associates with the EF-Tu.GDP complex and induces the exchange of GDP to GTP. It remains bound to the aminoacyl-tRNA.EF-Tu.GTP complex up to the GTP hydrolysis stage on the ribosome. The protein is Elongation factor Ts (tsf) of Chlamydia trachomatis serovar D (strain ATCC VR-885 / DSM 19411 / UW-3/Cx).